The following is a 205-amino-acid chain: Small ribosomal subunit protein uS4 (205 aa).

The S4 RNA-binding domain maps to 94–172; that stretch reads SRLDSIVYRM…TTPDYVSFDV (79 aa).

Belongs to the universal ribosomal protein uS4 family. Part of the 30S ribosomal subunit. Contacts protein S5. The interaction surface between S4 and S5 is involved in control of translational fidelity.

Functionally, one of the primary rRNA binding proteins, it binds directly to 16S rRNA where it nucleates assembly of the body of the 30S subunit. Its function is as follows. With S5 and S12 plays an important role in translational accuracy. In Rickettsia bellii (strain OSU 85-389), this protein is Small ribosomal subunit protein uS4.